The following is a 470-amino-acid chain: Cupincin (470 aa).

The N-terminal stretch at 1 to 34 is a signal peptide; the sequence is MAKKKTSSSMARSQLAALLISLCFLSLASNAVGW. The segment covering 36–52 has biased composition (basic and acidic residues); sequence RRGEREEEDERRRHGGE. Disordered stretches follow at residues 36 to 59 and 240 to 261; these read RRGEREEEDERRRHGGEGGRPYHL and KSCSRGGGGGSGSEWEIKPSSL. Cupin type-1 domains lie at 57 to 215 and 259 to 445; these read YHLG…EELE and SSLT…AREA. A glycan (N-linked (GlcNAc...) asparagine) is linked at N297. Residues 330–368 form a disordered region; it reads PHVSGGGSSERREREREHGRRREEEQGEEEHGERGEKAR. A compositionally biased stretch (basic and acidic residues) spans 338 to 367; that stretch reads SERREREREHGRRREEEQGEEEHGERGEKA. Zn(2+) contacts are provided by H347, E352, and H360.

This sequence belongs to the 7S seed storage protein family. In terms of assembly, homotrimer. Requires Zn(2+) as cofactor.

The protein localises to the secreted. In terms of biological role, seed storage protein. Globulin-like protein that acts as a zinc metalloprotease. Cleaves specifically between Leu-15 and Tyr-16 of insulin B chain, and Gln-1 and Leu-2 of neurotensin (NT) peptide in vitro. May play a role as an initiating endopeptidase in germinating seeds. This chain is Cupincin, found in Oryza sativa subsp. japonica (Rice).